Reading from the N-terminus, the 254-residue chain is Coenzyme F420:L-glutamate ligase (254 aa).

Residues 11-14 (IPLI), 40-41 (ST), and lysine 45 contribute to the GTP site. Aspartate 109 serves as a coordination point for a divalent metal cation. Asparagine 112 contributes to the GTP binding site. Residues aspartate 150, threonine 151, and glutamate 208 each coordinate a divalent metal cation. 206–213 (MGEGAGGI) contacts GTP.

The protein belongs to the CofE family. As to quaternary structure, homodimer. It depends on Mg(2+) as a cofactor. Requires Mn(2+) as cofactor. K(+) is required as a cofactor.

The enzyme catalyses oxidized coenzyme F420-0 + GTP + L-glutamate = oxidized coenzyme F420-1 + GDP + phosphate + H(+). It catalyses the reaction oxidized coenzyme F420-1 + GTP + L-glutamate = oxidized coenzyme F420-2 + GDP + phosphate + H(+). The protein operates within cofactor biosynthesis; coenzyme F420 biosynthesis. Its function is as follows. Catalyzes the GTP-dependent successive addition of two or more gamma-linked L-glutamates to the L-lactyl phosphodiester of 7,8-didemethyl-8-hydroxy-5-deazariboflavin (F420-0) to form coenzyme F420-0-glutamyl-glutamate (F420-2) or polyglutamated F420 derivatives. The sequence is that of Coenzyme F420:L-glutamate ligase from Methanosarcina acetivorans (strain ATCC 35395 / DSM 2834 / JCM 12185 / C2A).